A 271-amino-acid chain; its full sequence is Small ribosomal subunit protein uS2 (271 aa).

Residues 235–271 (FDAKNPLKPQNYNAPNKRPYQDSPRKPSYQNQNQNQI) are disordered. Residues 262-271 (SYQNQNQNQI) show a composition bias toward polar residues.

It belongs to the universal ribosomal protein uS2 family.

This chain is Small ribosomal subunit protein uS2, found in Onion yellows phytoplasma (strain OY-M).